The sequence spans 498 residues: MAPPMTNCLTFSLSPMEMLKSTDQSHFSSSYDDSSTPYLIDNFYAFKEEAEIEAAAASMADSTTLSTFFDHSQTQIPKLEDFLGDSFVRYSDNQTETQDSSSLTPFYDPRHRTVAEGVTGFFSDHHQPDFKTINSGPEIFDDSTTSNIGGTHLSSHVVESSTTAKLGFNGDCTTTGGVLSLGVNNTSDQPLSCNNGERGGNSNKKKTVSKKETSDDSKKKIVETLGQRTSIYRGVTRHRWTGRYEAHLWDNSCRREGQARKGRQVYLGGYDKEDRAARAYDLAALKYWGSTATTNFPVSSYSKELEEMNHMTKQEFIASLRRKSSGFSRGASIYRGVTRHHQQGRWQARIGRVAGNKDLYLGTFATEEEAAEAYDIAAIKFRGINAVTNFEMNRYDIEAVMNSSLPVGGAAAKRHKLKLALESPSSSSSDHNLQQQQLLPSSSPSDQNPNSIPCGIPFEPSVLYYHQNFFQHYPLVSDSTIQAPMNQAEFFLWPNQSY.

Positions 186–195 are enriched in polar residues; that stretch reads TSDQPLSCNN. Residues 186–220 are disordered; that stretch reads TSDQPLSCNNGERGGNSNKKKTVSKKETSDDSKKK. Over residues 209–220 the composition is skewed to basic and acidic residues; the sequence is SKKETSDDSKKK. 2 DNA-binding regions (AP2/ERF) span residues 231 to 297 and 333 to 391; these read IYRG…TNFP and IYRG…TNFE. Positions 422 to 451 are enriched in low complexity; sequence ESPSSSSSDHNLQQQQLLPSSSPSDQNPNS. Positions 422-452 are disordered; it reads ESPSSSSSDHNLQQQQLLPSSSPSDQNPNSI.

Belongs to the AP2/ERF transcription factor family. AP2 subfamily. In terms of assembly, interacts with HDG2, and possibly with HDG3, HDG7, ANL2, ATML1 and PDF2. Expressed in roots, seedlings, inflorescence, and siliques. Also detected at low levels in leaves.

It is found in the nucleus. Functionally, probably acts as a transcriptional activator. Binds to the GCC-box pathogenesis-related promoter element. May be involved in the regulation of gene expression by stress factors and by components of stress signal transduction pathways. This Arabidopsis thaliana (Mouse-ear cress) protein is AP2-like ethylene-responsive transcription factor AIL7.